The primary structure comprises 216 residues: MTTPRMLWDISAPVHAGSPVFPGDTPYSQQWCATIGPQCPVNVSALAMSPHVGTHADAPLHYDPQGATIGDVPLDAFIGPCRVIHAIGRGPLVAWEHIAHALGADRPALPQRVLVRTYERMPLDRWDAALAAYAPDTIERLADLGVVLVGIDTASIDPADSKSLDSHQVIRRRGLRVLENLVLDEVPEGDYELIALPLKLTTADASPVRAVLRTPA.

Residue Phe-21 coordinates substrate. His-51, His-55, and Asp-57 together coordinate Zn(2+). Residue His-61 is the Proton donor/acceptor of the active site. His-167 and Glu-179 together coordinate Zn(2+).

This sequence belongs to the Cyclase 1 superfamily. KynB family. As to quaternary structure, homodimer. Requires Zn(2+) as cofactor.

The enzyme catalyses N-formyl-L-kynurenine + H2O = L-kynurenine + formate + H(+). It participates in amino-acid degradation; L-tryptophan degradation via kynurenine pathway; L-kynurenine from L-tryptophan: step 2/2. Functionally, catalyzes the hydrolysis of N-formyl-L-kynurenine to L-kynurenine, the second step in the kynurenine pathway of tryptophan degradation. The protein is Kynurenine formamidase of Paracidovorax citrulli (strain AAC00-1) (Acidovorax citrulli).